We begin with the raw amino-acid sequence, 275 residues long: NH(3)-dependent NAD(+) synthetase (275 aa).

Gly46 to Ser53 contributes to the ATP binding site. Asp52 provides a ligand contact to Mg(2+). Arg140 is a deamido-NAD(+) binding site. Thr160 provides a ligand contact to ATP. Glu165 contacts Mg(2+). Positions 173 and 180 each coordinate deamido-NAD(+). ATP-binding residues include Lys189 and Thr211. His260–Lys261 provides a ligand contact to deamido-NAD(+).

The protein belongs to the NAD synthetase family. Homodimer.

The enzyme catalyses deamido-NAD(+) + NH4(+) + ATP = AMP + diphosphate + NAD(+) + H(+). It participates in cofactor biosynthesis; NAD(+) biosynthesis; NAD(+) from deamido-NAD(+) (ammonia route): step 1/1. Functionally, catalyzes the ATP-dependent amidation of deamido-NAD to form NAD. Uses ammonia as a nitrogen source. This is NH(3)-dependent NAD(+) synthetase from Salmonella enteritidis PT4 (strain P125109).